The chain runs to 224 residues: MSIRSWPAAERPRERLLELGAASLSDAELLAIFLRTGVAGKSAVDLARHLLNQFDGLRSLLDADQPAFTAQLGLGPAKFAQLQAVMEMARRHMAESLRRDSALENPAQVRNYLKAQLRHEPHEVFACLFLDNKHRVMTFEILFRGTINASYVHPRQVVKRALAHNAASLILCHNHPSGITTPSRSDIDLTKRLKEALKLVDVHVLDHVIVGDGEPLSMVEKGLM.

The MPN domain occupies 102 to 224 (ALENPAQVRN…PLSMVEKGLM (123 aa)). Zn(2+)-binding residues include histidine 173, histidine 175, and aspartate 186. The short motif at 173–186 (HNHPSGITTPSRSD) is the JAMM motif element.

This sequence belongs to the UPF0758 family.

The chain is UPF0758 protein PSPTO_0086 from Pseudomonas syringae pv. tomato (strain ATCC BAA-871 / DC3000).